The chain runs to 216 residues: Octanoyltransferase (216 aa).

One can recognise a BPL/LPL catalytic domain in the interval 34 to 209; it reads ENTIDEIWLV…KMNQQLDYSH (176 aa). Residues 73 to 80, 140 to 142, and 153 to 155 each bind substrate; these read RGGQITFH, SLG, and GLA. The active-site Acyl-thioester intermediate is C171.

Belongs to the LipB family.

The protein resides in the cytoplasm. The catalysed reaction is octanoyl-[ACP] + L-lysyl-[protein] = N(6)-octanoyl-L-lysyl-[protein] + holo-[ACP] + H(+). Its pathway is protein modification; protein lipoylation via endogenous pathway; protein N(6)-(lipoyl)lysine from octanoyl-[acyl-carrier-protein]: step 1/2. Catalyzes the transfer of endogenously produced octanoic acid from octanoyl-acyl-carrier-protein onto the lipoyl domains of lipoate-dependent enzymes. Lipoyl-ACP can also act as a substrate although octanoyl-ACP is likely to be the physiological substrate. The protein is Octanoyltransferase of Psychromonas ingrahamii (strain DSM 17664 / CCUG 51855 / 37).